A 299-amino-acid chain; its full sequence is rRNA methyltransferase (299 aa).

Residues 14-53 form a disordered region; the sequence is AEKRSGRGRMAAARTTGAQSRKTAQRSGRSEADRRRRVHG. Over residues 21–31 the composition is skewed to low complexity; sequence GRMAAARTTGA. Positions 55, 57, 82, 103, 128, and 144 each coordinate S-adenosyl-L-methionine.

It belongs to the class I-like SAM-binding methyltransferase superfamily. rRNA adenine N(6)-methyltransferase family.

In terms of biological role, probable RNA methylase. Confers resistance to carbomycin and several other macrolides, lincomycin and vernamycin B, but not to all macrolide-lincosamide-streptogramin B antibiotics. This is rRNA methyltransferase (carB) from Streptomyces thermotolerans.